We begin with the raw amino-acid sequence, 186 residues long: dCTP deaminase (186 aa).

Residue 107–112 participates in dCTP binding; that stretch reads KSSYAR. The active-site Proton donor/acceptor is Glu-133. DCTP is bound by residues Gln-152, Tyr-166, and Gln-176.

The protein belongs to the dCTP deaminase family. In terms of assembly, homotrimer.

The enzyme catalyses dCTP + H2O + H(+) = dUTP + NH4(+). The protein operates within pyrimidine metabolism; dUMP biosynthesis; dUMP from dCTP (dUTP route): step 1/2. Its function is as follows. Catalyzes the deamination of dCTP to dUTP. This is dCTP deaminase from Chloroflexus aurantiacus (strain ATCC 29366 / DSM 635 / J-10-fl).